The chain runs to 365 residues: Alpha-keto acid-binding periplasmic protein TakP (365 aa).

Residues 1-26 constitute a signal peptide (tat-type signal); the sequence is MDRRSFITKAAVGGAAASALAAPALA. Substrate-binding positions include 99–100, Q156, and R177; that span reads YY. A Na(+)-binding site is contributed by Q156. Positions 214, 215, and 240 each coordinate Na(+).

It belongs to the bacterial solute-binding protein 7 family. In terms of assembly, homodimer. The complex comprises the extracytoplasmic solute receptor protein TakP, and the two transmembrane proteins TakQ and TakM. Post-translationally, predicted to be exported by the Tat system. The position of the signal peptide cleavage has not been experimentally proven.

Its subcellular location is the periplasm. In terms of biological role, part of the tripartite ATP-independent periplasmic (TRAP) transport system TakPQM involved in the uptake of alpha-keto acids. This protein specifically binds alpha-keto acids including pyruvate, oxobutyrate, oxovalerate and 4-methyl-2-oxovalerate. Ligand-binding affinity increases with the increasing chain length of the aliphatic backbone of the ligand. Is not able to bind alpha-ketoglutarate. The protein is Alpha-keto acid-binding periplasmic protein TakP of Cereibacter sphaeroides (strain ATCC 17023 / DSM 158 / JCM 6121 / CCUG 31486 / LMG 2827 / NBRC 12203 / NCIMB 8253 / ATH 2.4.1.) (Rhodobacter sphaeroides).